A 401-amino-acid polypeptide reads, in one-letter code: Argininosuccinate synthase (401 aa).

Residue 8–16 (AYSGGLDTS) participates in ATP binding. Tyr85 serves as a coordination point for L-citrulline. Position 115 (Gly115) interacts with ATP. L-aspartate contacts are provided by Thr117, Asn121, and Asp122. Asn121 serves as a coordination point for L-citrulline. The L-citrulline site is built by Arg125, Ser173, Glu258, and Tyr270.

This sequence belongs to the argininosuccinate synthase family. Type 1 subfamily. Homotetramer.

Its subcellular location is the cytoplasm. It catalyses the reaction L-citrulline + L-aspartate + ATP = 2-(N(omega)-L-arginino)succinate + AMP + diphosphate + H(+). The protein operates within amino-acid biosynthesis; L-arginine biosynthesis; L-arginine from L-ornithine and carbamoyl phosphate: step 2/3. The sequence is that of Argininosuccinate synthase from Staphylococcus aureus (strain MSSA476).